The primary structure comprises 177 residues: ATP synthase subunit delta (177 aa).

This sequence belongs to the ATPase delta chain family. In terms of assembly, F-type ATPases have 2 components, F(1) - the catalytic core - and F(0) - the membrane proton channel. F(1) has five subunits: alpha(3), beta(3), gamma(1), delta(1), epsilon(1). F(0) has three main subunits: a(1), b(2) and c(10-14). The alpha and beta chains form an alternating ring which encloses part of the gamma chain. F(1) is attached to F(0) by a central stalk formed by the gamma and epsilon chains, while a peripheral stalk is formed by the delta and b chains.

The protein resides in the cell inner membrane. In terms of biological role, f(1)F(0) ATP synthase produces ATP from ADP in the presence of a proton or sodium gradient. F-type ATPases consist of two structural domains, F(1) containing the extramembraneous catalytic core and F(0) containing the membrane proton channel, linked together by a central stalk and a peripheral stalk. During catalysis, ATP synthesis in the catalytic domain of F(1) is coupled via a rotary mechanism of the central stalk subunits to proton translocation. Its function is as follows. This protein is part of the stalk that links CF(0) to CF(1). It either transmits conformational changes from CF(0) to CF(1) or is implicated in proton conduction. This chain is ATP synthase subunit delta, found in Aliivibrio fischeri (strain MJ11) (Vibrio fischeri).